Here is a 471-residue protein sequence, read N- to C-terminus: MEILCEDNTSLSSIPNSLMQVDGDSGLYRNDFNSRDANSSDASNWTIDGENRTNLSFEGYLPPTCLSILHLQEKNWSALLTAVVIILTIAGNILVIMAVSLEKKLQNATNYFLMSLAIADMLLGFLVMPVSMLTILYGYRWPLPSKLCAVWIYLDVLFSTASIMHLCAISLDRYVAIQNPIHHSRFNSRTKAFLKIIAVWTISVGVSMPIPVFGLQDDSKVFKQGSCLLADDNFVLIGSFVAFFIPLTIMVITYFLTIKSLQKEATLCVSDLSTRAKLASFSFLPQSSLSSEKLFQRSIHREPGSYTGRRTMQSISNEQKACKVLGIVFFLFVVMWCPFFITNIMAVICKESCNEHVIGALLNVFVWIGYLSSAVNPLVYTLFNKTYRSAFSRYIQCQYKENRKPLQLILVNTIPALAYKSSQLQAGQNKDSKEDAEPTDNDCSMVTLGKQQSEETCTDNINTVNEKVSCV.

At 1 to 80 (MEILCEDNTS…LQEKNWSALL (80 aa)) the chain is on the extracellular side. Residues asparagine 8, asparagine 38, asparagine 44, asparagine 51, and asparagine 54 are each glycosylated (N-linked (GlcNAc...) asparagine). Residues 81 to 97 (TAVVIILTIAGNILVIM) traverse the membrane as a helical segment. At 98–111 (AVSLEKKLQNATNY) the chain is on the cytoplasmic side. Residues 112–137 (FLMSLAIADMLLGFLVMPVSMLTILY) traverse the membrane as a helical segment. At 138–146 (GYRWPLPSK) the chain is on the extracellular side. The chain crosses the membrane as a helical span at residues 147-171 (LCAVWIYLDVLFSTASIMHLCAISL). A disulfide bond links cysteine 148 and cysteine 227. Residue aspartate 155 coordinates serotonin. The short motif at 172-174 (DRY) is the DRY motif; important for ligand-induced conformation changes element. The Cytoplasmic portion of the chain corresponds to 172 to 191 (DRYVAIQNPIHHSRFNSRTK). The helical transmembrane segment at 192–215 (AFLKIIAVWTISVGVSMPIPVFGL) threads the bilayer. Over 216–232 (QDDSKVFKQGSCLLADD) the chain is Extracellular. The helical transmembrane segment at 233 to 258 (NFVLIGSFVAFFIPLTIMVITYFLTI) threads the bilayer. At 259 to 322 (KSLQKEATLC…QSISNEQKAC (64 aa)) the chain is on the cytoplasmic side. Serine 280 is subject to Phosphoserine. The chain crosses the membrane as a helical span at residues 323–348 (KVLGIVFFLFVVMWCPFFITNIMAVI). Asparagine 343 is a serotonin binding site. Cysteines 349 and 353 form a disulfide. Over 349–356 (CKESCNEH) the chain is Extracellular. The helical transmembrane segment at 357 to 382 (VIGALLNVFVWIGYLSSAVNPLVYTL) threads the bilayer. The NPxxY motif; important for ligand-induced conformation changes and signaling motif lies at 376 to 380 (NPLVY). At 383 to 471 (FNKTYRSAFS…NTVNEKVSCV (89 aa)) the chain is on the cytoplasmic side. A PDZ-binding motif is present at residues 469 to 471 (SCV).

It belongs to the G-protein coupled receptor 1 family. In terms of assembly, interacts (via C-terminus) with MPDZ and PATJ. May interact (via C-terminus) with MPP3, PRDX6, DLG4, DLG1, CASK, APBA1 and MAGI2. Interacts with GRM2 and DRD2; this may affect signaling.

It is found in the cell membrane. Its subcellular location is the cell projection. The protein resides in the dendrite. The protein localises to the axon. It localises to the cytoplasmic vesicle. It is found in the membrane. Its subcellular location is the caveola. The protein resides in the presynapse. Its activity is regulated as follows. G-protein coupled receptor activity is regulated by lipids: oleamide increases HTR2A-mediated activity. G-protein coupled receptor for 5-hydroxytryptamine (serotonin). Also functions as a receptor for various drugs and psychoactive substances, including mescaline, psilocybin, 1-(2,5-dimethoxy-4-iodophenyl)-2-aminopropane (DOI) and lysergic acid diethylamide (LSD). Ligand binding causes a conformation change that triggers signaling via guanine nucleotide-binding proteins (G proteins) and modulates the activity of downstream effectors. HTR2A is coupled to G(q)/G(11) G alpha proteins and activates phospholipase C-beta, releasing diacylglycerol (DAG) and inositol 1,4,5-trisphosphate (IP3) second messengers that modulate the activity of phosphatidylinositol 3-kinase and promote the release of Ca(2+) ions from intracellular stores, respectively. Beta-arrestin family members inhibit signaling via G proteins and mediate activation of alternative signaling pathways. Affects neural activity, perception, cognition and mood. Plays a role in the regulation of behavior, including responses to anxiogenic situations and psychoactive substances. Plays a role in intestinal smooth muscle contraction, and may play a role in arterial vasoconstriction. The polypeptide is 5-hydroxytryptamine receptor 2A (HTR2A) (Cricetulus griseus (Chinese hamster)).